The following is a 1093-amino-acid chain: Protein AF-17 (1093 aa).

The segment at 5-57 (VGGCCVCSDERGWAENPLVYCDGHACSVAVHQACYGIVQVPTGPWFCRKCESQ) adopts a PHD-type 1 zinc-finger fold. The segment at 62–95 (RVRCELCPHKDGALKRTDNGGWAHVVCALYIPEV) adopts a C2HC pre-PHD-type zinc-finger fold. Residues 118–181 (KTCYICEEQG…KYCGYCKYHF (64 aa)) form a PHD-type 2 zinc finger. The disordered stretch occupies residues 185 to 500 (KTSRHSSGGG…GGPAAPSLPS (316 aa)). Residues 191–212 (SGGGGGGAGGGGGSMGGGGSGF) are compositionally biased toward gly residues. A compositionally biased stretch (basic residues) spans 231 to 255 (PTHHERGQKKSRKDKERLKQKHKKR). Residue serine 258 is modified to Phosphoserine. Residues 258-268 (SPPSILTPPVV) are compositionally biased toward pro residues. Over residues 282-300 (SHHEASTQETSESSRESKG) the composition is skewed to basic and acidic residues. The span at 301–316 (KKSSSHSLSHKGKKLS) shows a compositional bias: basic residues. A compositionally biased stretch (low complexity) spans 317–340 (SGKGVSSFTSASSSSSSSSSSSGG). Residues 345–354 (AVSSLQSSPD) are compositionally biased toward polar residues. Positions 374–388 (APAPSAPPSPSAPEP) are enriched in pro residues. Residues serine 378 and serine 423 each carry the phosphoserine modification. Residues 410-425 (STTTSSSGRARAPSPG) show a composition bias toward low complexity. At threonine 451 the chain carries Phosphothreonine. A compositionally biased stretch (basic residues) spans 465–484 (EKKHKASKRSRHGPGRPKGS). Residues 729 to 764 (LQKENQRLQEQILSLTAKKERLQILNVQLSVPFPAL) form a leucine-zipper region. 2 disordered regions span residues 775–871 (VPGP…RAPG) and 1060–1093 (QTNP…QEKG). The span at 787–796 (SSDSLSTSKS) shows a compositional bias: low complexity. Residues 804–813 (GLDNSLSTSS) are compositionally biased toward polar residues. Low complexity-rich tracts occupy residues 818 to 832 (SGCP…SFHS) and 839 to 853 (LLQQ…ALPG).

In terms of assembly, interacts with histone H3; interaction is necessary for MLLT6 binding to nucleosomes; interaction is inhibited by histone H3 'Lys-27' methylations (H3K27me1, H3K27me2 and H3K27me3).

The protein resides in the nucleus. The polypeptide is Protein AF-17 (MLLT6) (Homo sapiens (Human)).